Reading from the N-terminus, the 168-residue chain is G/U mismatch-specific DNA glycosylase (168 aa).

Belongs to the uracil-DNA glycosylase (UDG) superfamily. TDG/mug family. As to quaternary structure, binds DNA as a monomer.

It is found in the cytoplasm. It carries out the reaction Specifically hydrolyzes mismatched double-stranded DNA and polynucleotides, releasing free uracil.. Its function is as follows. Excises ethenocytosine and uracil, which can arise by alkylation or deamination of cytosine, respectively, from the corresponding mispairs with guanine in ds-DNA. It is capable of hydrolyzing the carbon-nitrogen bond between the sugar-phosphate backbone of the DNA and the mispaired base. The complementary strand guanine functions in substrate recognition. Required for DNA damage lesion repair in stationary-phase cells. The polypeptide is G/U mismatch-specific DNA glycosylase (Citrobacter koseri (strain ATCC BAA-895 / CDC 4225-83 / SGSC4696)).